The chain runs to 351 residues: Uroporphyrinogen decarboxylase (351 aa).

Substrate is bound by residues 25–29 (RQAGR), aspartate 74, tyrosine 151, serine 206, and histidine 325.

It belongs to the uroporphyrinogen decarboxylase family. As to quaternary structure, homodimer.

It localises to the cytoplasm. The enzyme catalyses uroporphyrinogen III + 4 H(+) = coproporphyrinogen III + 4 CO2. It participates in porphyrin-containing compound metabolism; protoporphyrin-IX biosynthesis; coproporphyrinogen-III from 5-aminolevulinate: step 4/4. Its function is as follows. Catalyzes the decarboxylation of four acetate groups of uroporphyrinogen-III to yield coproporphyrinogen-III. The sequence is that of Uroporphyrinogen decarboxylase from Chlorobium phaeobacteroides (strain DSM 266 / SMG 266 / 2430).